A 477-amino-acid polypeptide reads, in one-letter code: Aspartyl/glutamyl-tRNA(Asn/Gln) amidotransferase subunit B (477 aa).

This sequence belongs to the GatB/GatE family. GatB subfamily. Heterotrimer of A, B and C subunits.

It catalyses the reaction L-glutamyl-tRNA(Gln) + L-glutamine + ATP + H2O = L-glutaminyl-tRNA(Gln) + L-glutamate + ADP + phosphate + H(+). It carries out the reaction L-aspartyl-tRNA(Asn) + L-glutamine + ATP + H2O = L-asparaginyl-tRNA(Asn) + L-glutamate + ADP + phosphate + 2 H(+). Functionally, allows the formation of correctly charged Asn-tRNA(Asn) or Gln-tRNA(Gln) through the transamidation of misacylated Asp-tRNA(Asn) or Glu-tRNA(Gln) in organisms which lack either or both of asparaginyl-tRNA or glutaminyl-tRNA synthetases. The reaction takes place in the presence of glutamine and ATP through an activated phospho-Asp-tRNA(Asn) or phospho-Glu-tRNA(Gln). In Nitrosococcus oceani (strain ATCC 19707 / BCRC 17464 / JCM 30415 / NCIMB 11848 / C-107), this protein is Aspartyl/glutamyl-tRNA(Asn/Gln) amidotransferase subunit B.